Consider the following 555-residue polypeptide: MANPLLYSPINPQFFQPLLPGFTNHLDIPVAFFLKYLVGTNVGKTAELRSDASEMTWKVKIDGRRLSNGWEDFTIAHDLRVGDIVVFRQEGELVFHVTALGPSCCEIQYGEDTLEEDKIEKLCGTENVSSKKKSLKREAESAPDNSLDSCFVATVTGSNLKRDTLYIPKEFALSNGLMNKYQIVLMNEEGESWKIDLRREAYNYGRFYMRRGWRSFCIANGKKPGDVFAFKLVKNEETPMIQLFPMTIEDLDKLQSLPRHKIRKTEAAPSSPDLSSFVATVTASNLSRDRLYLPKTFIMSNGLLKKFQMCLMNEEGESWTIDVKHEAHTGRFLTIRGWRRFCVANGKKPGDLLKFKLVHNEETPVLQLLPLNSEDLHKLNPSNDTRHGQSLKVTKKEFLGMEATENEFLGEEVYCNDSFKASEKDTLPFAEPINEDIRQGQCSQTIKQEYVSTEEKNSTSQNRFVTLTLTHSSKLNLPFEFMKRNGIKKAGKITMVDRYDAKWRTSLLMDKIGTMSLGRGSKGFCEVNGVEMNESFILELIWEDTVPLLKFCSKV.

4 consecutive DNA-binding regions (TF-B3) follow at residues 11-103 (NPQF…LGPS), 150-247 (CFVA…FPMT), 276-372 (SFVA…LPLN), and 460-554 (SQNR…FCSK).

It localises to the nucleus. The protein is B3 domain-containing protein REM10 (REM10) of Arabidopsis thaliana (Mouse-ear cress).